The following is a 289-amino-acid chain: Rhodopsin (289 aa).

Residues Y1–G7 are Extracellular-facing. A helical transmembrane segment spans residues Y8–V32. The Cytoplasmic portion of the chain corresponds to T33–N44. The chain crosses the membrane as a helical span at residues Y45–Y67. Residues T68–C81 lie on the Extracellular side of the membrane. Cysteines 81 and 158 form a disulfide. A helical membrane pass occupies residues I82–I104. The short motif at E105–W107 is the 'Ionic lock' involved in activated form stabilization element. At E105–H123 the chain is on the cytoplasmic side. The chain crosses the membrane as a helical span at residues A124–V144. The Extracellular portion of the chain corresponds to G145–S173. Residue N171 is glycosylated (N-linked (GlcNAc...) asparagine). A helical transmembrane segment spans residues F174 to G195. At R196 to R223 the chain is on the cytoplasmic side. The helical transmembrane segment at M224–W245 threads the bilayer. Residues I246–I257 are Extracellular-facing. The helical transmembrane segment at F258–C279 threads the bilayer. An N6-(retinylidene)lysine modification is found at K267. Topologically, residues M280–I289 are cytoplasmic.

Belongs to the G-protein coupled receptor 1 family. Opsin subfamily. Phosphorylated on some or all of the serine and threonine residues present in the C-terminal region. Post-translationally, contains one covalently linked retinal chromophore.

Its subcellular location is the membrane. It localises to the cell projection. The protein resides in the cilium. The protein localises to the photoreceptor outer segment. Functionally, photoreceptor required for image-forming vision at low light intensity. While most salt water fish species use retinal as chromophore, most freshwater fish use 3-dehydroretinal, or a mixture of retinal and 3-dehydroretinal. Light-induced isomerization of 11-cis to all-trans retinal triggers a conformational change that activates signaling via G-proteins. Subsequent receptor phosphorylation mediates displacement of the bound G-protein alpha subunit by arrestin and terminates signaling. This chain is Rhodopsin (rho), found in Limnocottus bergianus.